The sequence spans 245 residues: tRNA pseudouridine synthase A (245 aa).

Residue aspartate 52 is the Nucleophile of the active site. Tyrosine 111 contributes to the substrate binding site.

Belongs to the tRNA pseudouridine synthase TruA family. Homodimer.

It catalyses the reaction uridine(38/39/40) in tRNA = pseudouridine(38/39/40) in tRNA. Formation of pseudouridine at positions 38, 39 and 40 in the anticodon stem and loop of transfer RNAs. The polypeptide is tRNA pseudouridine synthase A (Rhodopseudomonas palustris (strain BisB18)).